Here is a 232-residue protein sequence, read N- to C-terminus: N-acetyltransferase 8B (232 aa).

Over 1 to 62 the chain is Cytoplasmic; sequence MPRFEAQKSS…FLLLLGVPLA (62 aa). A helical; Signal-anchor for type II membrane protein transmembrane segment spans residues 63–83; that stretch reads LVLVSGSWILAVICIFFLLLL. Residues 79-224 enclose the N-acetyltransferase domain; it reads FLLLLLRLLA…WRLVDICFIQ (146 aa). Residues 84–232 lie on the Lumenal side of the membrane; the sequence is LRLLARQPWK…IQLNYSFPSA (149 aa). Lysine 109 bears the N6-acetyllysine mark.

It belongs to the NAT8 family. In terms of processing, acetylation on Lys-109 modulates enzymatic activity. In terms of tissue distribution, expressed in brain (at protein level).

It localises to the endoplasmic reticulum-Golgi intermediate compartment membrane. Its subcellular location is the endoplasmic reticulum membrane. It carries out the reaction L-lysyl-[protein] + acetyl-CoA = N(6)-acetyl-L-lysyl-[protein] + CoA + H(+). Functionally, endoplasmic reticulum (ER)-membrane-bound lysine N-acetyltransferase catalyzing the N6-acetylation of lysine residues in the lumen of the ER in various proteins, including PROM1 and BACE1, using acetyl-CoA as acetyl donor. Thereby, may regulate apoptosis through the acetylation and the regulation of the expression of PROM1. Acetylates and stabilizes BACE1 immature protein, leading to increased steady-state levels in neurons. By acting on BACE1 expression, may regulate amyloid beta-peptide formation. N(6)-lysine acetylation in ER maintains protein homeostasis and regulates reticulophagy. The protein is N-acetyltransferase 8B of Mus musculus (Mouse).